The sequence spans 126 residues: Small ribosomal subunit protein uS12 (126 aa).

Residue aspartate 89 is modified to 3-methylthioaspartic acid.

Belongs to the universal ribosomal protein uS12 family. Part of the 30S ribosomal subunit. Contacts proteins S8 and S17. May interact with IF1 in the 30S initiation complex.

Functionally, with S4 and S5 plays an important role in translational accuracy. Its function is as follows. Interacts with and stabilizes bases of the 16S rRNA that are involved in tRNA selection in the A site and with the mRNA backbone. Located at the interface of the 30S and 50S subunits, it traverses the body of the 30S subunit contacting proteins on the other side and probably holding the rRNA structure together. The combined cluster of proteins S8, S12 and S17 appears to hold together the shoulder and platform of the 30S subunit. The chain is Small ribosomal subunit protein uS12 from Sulfurimonas denitrificans (strain ATCC 33889 / DSM 1251) (Thiomicrospira denitrificans (strain ATCC 33889 / DSM 1251)).